The chain runs to 1085 residues: MAGPGSLCCASRGASALLATALLYAALGDVVRSEQQIPLSVVKLWASAFGGEIKSIAAKYSGSQLLQKKYKEYEKDVAIEEIDGLQLVKKLAKNMEEMFHKKSEAVRRLVEAAEEAHLKHEFDADLQYEYFNAVLINERDKDGNFLELGKEFILAPNDHFNNLPVNISLSDVQVPTNMYNKDPAIVNGVYWSESLNKVFVDNFDRDPSLIWQYFGSAKGFFRQYPGIKWEPDENGVIAFDCRNRKWYIQAATSPKDVVILVDVSGSMKGLRLTIAKQTVSSILDTLGDDDFFNIITYNEELHYVEPCLNGTLVQADRTNKEHFREHLDKLFAKGIGMLDIALNEAFNVLSDFNHTGQGSICSQAIMLITDGAVDTYDTIFAKYNWPERKVRIFTYLIGREAAFADNLKWMACANKGFFTQISTLADVQENVMEYLHVLSRPKVIDQEHDVVWTEAYIDSTLADDQGLVLMTTVAMPVFSKQNETRSKGILLGVVGTDVPVKELLKTIPKYKLGIHGYAFAITNNGYILTHPELRPLYEEGKKRRKPNYSSVDLSEVEWEDRDDVLRNAMVNRKTGKFSMEVKKTVDKGKRVLVMTNDYYYTDIKGAPFSLGVALSRGHGKYFFRGNVTIEEGLHDLEHPDVSLADEWSYCNTDLHPEHRHLSQLEAIKLYLKGKEPLLQCDKELIQEVLFDAVVSAPIEAYWTSLALNKSENSDKGVEVAFLGTRTGLSRINLFVGAEQLTNQDFLKARDKENIFNADHFPLWYRRAAEQIPGSFVYSIPFSTGTVNKSNVVTASTSIQLLDERKSPVVAAVGIQMKLEFFQRKFWTASRQCASLDGKCSISCDDETVNCYLIDNNGFILVSEDYTQTGDFFGEVEGAVMNKLLTMGSFKRITLYDYQAMCRANKESSDSAHGLLDPYKAFLSAAKWIVTELVLFLVEFNLCSWWHSDMTAKAQKLKQTLEPCDTEYPAFVSERTIKETTGNIACEDCSKSFVIQQIPSSNLFMVVVDSSCLCESVAPITMAPIEIRYNESLKCERLKAQKIRRRPESCHGFHPEENARECGGASSLQAQVALLLLPLVSSLFSR.

Residues 1–33 (MAGPGSLCCASRGASALLATALLYAALGDVVRS) form the signal peptide. Residues 34-1062 (EQQIPLSVVK…HPEENARECG (1029 aa)) lie on the Extracellular side of the membrane. N-linked (GlcNAc...) asparagine glycosylation occurs at Asn-166. The region spanning 256–438 (DVVILVDVSG…ENVMEYLHVL (183 aa)) is the VWFA domain. Asp-262, Ser-264, and Ser-266 together coordinate a divalent metal cation. Positions 262–266 (DVSGS) match the MIDAS-like motif motif. N-linked (GlcNAc...) asparagine glycosylation occurs at Asn-309. A disulfide bridge links Cys-412 with Cys-1049. The 92-residue stretch at 452–543 (WTEAYIDSTL…RPLYEEGKKR (92 aa)) folds into the Cache domain. Asn-547 and Asn-626 each carry an N-linked (GlcNAc...) asparagine glycan. Residue Tyr-918 is modified to Phosphotyrosine. Residues 1063 to 1083 (GASSLQAQVALLLLPLVSSLF) traverse the membrane as a helical segment. Topologically, residues 1084–1085 (SR) are cytoplasmic.

The protein belongs to the calcium channel subunit alpha-2/delta family. As to quaternary structure, dimer formed of alpha-2-2 and delta-2 chains; disulfide-linked. Voltage-dependent calcium channels are multisubunit complexes, consisting of alpha-1 (CACNA1), alpha-2 (CACNA2D), beta (CACNB) and delta (CACNA2D) subunits in a 1:1:1:1 ratio. N-glycosylated. Post-translationally, may be proteolytically processed into subunits alpha-2-3 and delta-3 that are disulfide-linked. It is however unclear whether such cleavage really takes place in vivo and has a functional role. In heart, it is expressed in atrium but not in ventricle.

It is found in the membrane. The alpha-2/delta subunit of voltage-dependent calcium channels regulates calcium current density and activation/inactivation kinetics of the calcium channel. Acts as a regulatory subunit for P/Q-type calcium channel (CACNA1A), N-type (CACNA1B), L-type (CACNA1C OR CACNA1D) but not T-type (CACNA1G). The protein is Voltage-dependent calcium channel subunit alpha-2/delta-3 (Cacna2d3) of Rattus norvegicus (Rat).